The chain runs to 168 residues: Protein B-Myc (168 aa).

Disordered stretches follow at residues 26-94 (DDEE…DLPE) and 146-168 (EGAS…TCNT). Phosphoserine occurs at positions 59 and 67.

It is found in the nucleus. Seems to act as an inhibitor of cellular proliferation. The chain is Protein B-Myc (Mycb) from Rattus norvegicus (Rat).